The chain runs to 313 residues: Porphobilinogen deaminase (313 aa).

Cys-242 carries the post-translational modification S-(dipyrrolylmethanemethyl)cysteine.

Belongs to the HMBS family. In terms of assembly, monomer. The cofactor is dipyrromethane.

The catalysed reaction is 4 porphobilinogen + H2O = hydroxymethylbilane + 4 NH4(+). Its pathway is porphyrin-containing compound metabolism; protoporphyrin-IX biosynthesis; coproporphyrinogen-III from 5-aminolevulinate: step 2/4. Its function is as follows. Tetrapolymerization of the monopyrrole PBG into the hydroxymethylbilane pre-uroporphyrinogen in several discrete steps. This Marinobacter nauticus (strain ATCC 700491 / DSM 11845 / VT8) (Marinobacter aquaeolei) protein is Porphobilinogen deaminase.